The chain runs to 857 residues: DNA mismatch repair protein MutS (857 aa).

Residue 608–615 (GPNMSGKS) participates in ATP binding.

It belongs to the DNA mismatch repair MutS family.

This protein is involved in the repair of mismatches in DNA. It is possible that it carries out the mismatch recognition step. This protein has a weak ATPase activity. This is DNA mismatch repair protein MutS from Lactobacillus johnsonii (strain CNCM I-12250 / La1 / NCC 533).